Here is an 882-residue protein sequence, read N- to C-terminus: MKIIINNDFPVAKVGADQITTLVSAKVHSCIYRPRLSIADGAAPRVCLYRAPPGYGKTVALAFEWLRHRTAGRPAVWLSLRASSYSEFDICAEIIEQLETFEMVKFSRVREGVSKPALLRDLASSLWQSTSNNEIETLVCLDNINHDLDLPLLHALMEFMLNTPKNIRFAVAGNTIKGFSQLKLAGAMREYTEKDLAFSAEEAVALAEAESVLGVPEEQIETLVQEVEGWPALVVFLLKRELPAKHISAVVEVDNYFRDEIFEAIPERYRVFLANSSLLDFVTPDQYNYVFKCVNGVSCIKYLSTNYMLLRHVSGEPAQFTLHPVLRNFLREITWTENPAKRSYLLKRAAFWHWRRGEYQYAIRISLRANDCRWAVSMSERIILDLSFRQGEIDALRQWLLELPKQAWHQKPIVLISYAWVLYFSQQGARAEKLIKDLSSQSDKKNKWQEKEWLQLVLAIGKATKDEMLSSEELCNKWISLFGDSNAVGKGAALTCLAFIFASEYRFAELEKVLAQAQAVNKFAKQNFAFGWLYVARFQQALASGKMGWARQIITQARTDSRAQMMESEFTSKMFDALELELHYELRCLDTSEEKLSKILEFISNHGVTDVFFSVCRAVSAWRLGRSDLNGSIEILEWAKAHAVEKNLPRLEVMSQIEIYQRLVCQGITGINNLKTLEDHKIFSGQHSAPLKARLLLVQSLVLSRDRNFHSAAHRALLAIQQARKINAGQLEVRGLLCLAGAQAGAGDLKKAQLNIVYAVEIAKQLQCFQTVLDEVCLIERIIPASCEAFTAVNLDQAIGAFSLPRIVEIGKSAENKADALLTRKQIAVLRLVKEGCSNKQIATNMHVTEDAIKWHMRKIFATLNVVNRTQATIEAERQGII.

An ATP-binding site is contributed by alanine 51 to threonine 58. The HTH luxR-type domain occupies glutamate 815–glycine 880. A DNA-binding region (H-T-H motif) is located at residues asparagine 839–arginine 858.

Its pathway is hydrocarbon metabolism; alkane degradation. Functionally, this protein activates the expression of alkBFGHJKL operon in the presence of alkanes. This Ectopseudomonas oleovorans (Pseudomonas oleovorans) protein is HTH-type transcriptional regulator AlkS (alkS).